The chain runs to 125 residues: Large ribosomal subunit protein bL19 (125 aa).

It belongs to the bacterial ribosomal protein bL19 family.

This protein is located at the 30S-50S ribosomal subunit interface and may play a role in the structure and function of the aminoacyl-tRNA binding site. The protein is Large ribosomal subunit protein bL19 of Wolbachia pipientis subsp. Culex pipiens (strain wPip).